The primary structure comprises 335 residues: Serine/threonine-protein kinase crk1 (335 aa).

The 282-residue stretch at 11-292 folds into the Protein kinase domain; sequence YVKERKVGEG…AQQALEHHYF (282 aa). Residues 17-25 and Lys40 each bind ATP; that span reads VGEGTYAVV. Asp133 (proton acceptor) is an active-site residue. A Phosphoserine modification is found at Ser162. Phosphoserine; by CAK is present on Ser165. The residue at position 318 (Ser318) is a Phosphoserine.

The protein belongs to the protein kinase superfamily. CMGC Ser/Thr protein kinase family. CDC2/CDKX subfamily. One of the nine subunits forming the core-TFIIH basal transcription factor. Interacts with mcs2 and tfb3.

It localises to the cytoplasm. Its subcellular location is the nucleus. It catalyses the reaction [DNA-directed RNA polymerase] + ATP = phospho-[DNA-directed RNA polymerase] + ADP + H(+). Functionally, protein kinase essential for cell proliferation, where it is required for completion of cytokinesis. Phosphorylates the C-terminal repeat domain (CTD) of RNA polymerase II. The polypeptide is Serine/threonine-protein kinase crk1 (crk1) (Schizosaccharomyces pombe (strain 972 / ATCC 24843) (Fission yeast)).